The following is a 719-amino-acid chain: Protein Hook homolog 2 (719 aa).

Positions 1–161 (MSVDKAELCG…ELMTKDTPDS (161 aa)) are required for localization to the centrosome and induction of aggresome formation. Residues 1–548 (MSVDKAELCG…LKRKLEEHLQ (548 aa)) are sufficient for interaction with microtubules. Positions 6-122 (AELCGSLLTW…KLLQLVLGCA (117 aa)) constitute a Calponin-homology (CH) domain. Ser-163 bears the Phosphoserine mark. Coiled coils occupy residues 180-427 (LSEE…AQLQ) and 455-607 (AELR…VDKA). Thr-230 bears the Phosphothreonine mark. The tract at residues 533 to 719 (DAISILLKRK…SLNLRPTDKH (187 aa)) is required for localization to the centrosome and induction of aggresome formation. The segment at 584 to 719 (HNLQKKDADL…SLNLRPTDKH (136 aa)) is sufficient for interaction with CNTRL. Residues 696 to 719 (LATNSRRGPLGRLASLNLRPTDKH) form a disordered region. A Phosphoserine modification is found at Ser-710.

The protein belongs to the hook family. As to quaternary structure, self-associates. Component of the FTS/Hook/FHIP complex (FHF complex), composed of AKTIP/FTS, FHIP1B, and one or more members of the Hook family of proteins HOOK1, HOOK2, and HOOK3. May interact directly with AKTIP/FTS, HOOK1 and HOOK3. Associates with several subunits of the homotypic vesicular sorting complex (the HOPS complex) including VPS16 and VPS41; these interactions may be indirect. Interacts with CNTRL. Interacts with microtubules. Interacts with ZC3H14. Interacts with LRGUK (via guanylate kinase-like domain). Interacts with CCDC181. Interacts with AP4M1; the interaction is direct, mediates the interaction between FTS-Hook-FHIP (FHF) complex and AP-4 and the perinuclear distribution of AP-4.

It localises to the cytoplasm. Its subcellular location is the cytoskeleton. The protein resides in the microtubule organizing center. The protein localises to the centrosome. It is found in the golgi apparatus. It localises to the trans-Golgi network. Functionally, component of the FTS/Hook/FHIP complex (FHF complex). The FHF complex may function to promote vesicle trafficking and/or fusion via the homotypic vesicular protein sorting complex (the HOPS complex). Contributes to the establishment and maintenance of centrosome function. May function in the positioning or formation of aggresomes, which are pericentriolar accumulations of misfolded proteins, proteasomes and chaperones. FHF complex promotes the distribution of AP-4 complex to the perinuclear area of the cell. This Homo sapiens (Human) protein is Protein Hook homolog 2 (HOOK2).